Consider the following 433-residue polypeptide: sn-glycerol-3-phosphate-binding periplasmic protein UgpB (433 aa).

Positions 1-25 (MFTRLITTSVLTGAIALTIGSQAFA) are cleaved as a signal peptide. Sn-glycerol 3-phosphate-binding residues include tyrosine 67, aspartate 91, serine 146, serine 273, glycine 307, tyrosine 346, and arginine 397.

This sequence belongs to the bacterial solute-binding protein 1 family. As to quaternary structure, the complex is composed of two ATP-binding proteins (UgpC), two transmembrane proteins (UgpA and UgpE) and a solute-binding protein (UgpB).

The protein resides in the periplasm. Part of the ABC transporter complex UgpBAEC involved in sn-glycerol-3-phosphate (G3P) import. Binds G3P. The protein is sn-glycerol-3-phosphate-binding periplasmic protein UgpB (ugpB) of Brucella abortus (strain 2308).